The chain runs to 407 residues: Biotin synthase (407 aa).

Residues 47–277 (WFGRRVKLNY…DVEVRIAGGR (231 aa)) form the Radical SAM core domain. Positions 65, 69, and 72 each coordinate [4Fe-4S] cluster. Cysteine 109, cysteine 142, cysteine 202, and arginine 272 together coordinate [2Fe-2S] cluster. A disordered region spans residues 368–407 (GGGVCAPAPAATTPRPAEEPRTDLVAVRRRGAGTDLAPNA). Residues 373–382 (APAPAATTPR) are compositionally biased toward low complexity.

It belongs to the radical SAM superfamily. Biotin synthase family. Homodimer. [4Fe-4S] cluster is required as a cofactor. [2Fe-2S] cluster serves as cofactor.

The catalysed reaction is (4R,5S)-dethiobiotin + (sulfur carrier)-SH + 2 reduced [2Fe-2S]-[ferredoxin] + 2 S-adenosyl-L-methionine = (sulfur carrier)-H + biotin + 2 5'-deoxyadenosine + 2 L-methionine + 2 oxidized [2Fe-2S]-[ferredoxin]. Its pathway is cofactor biosynthesis; biotin biosynthesis; biotin from 7,8-diaminononanoate: step 2/2. Its function is as follows. Catalyzes the conversion of dethiobiotin (DTB) to biotin by the insertion of a sulfur atom into dethiobiotin via a radical-based mechanism. This Streptomyces coelicolor (strain ATCC BAA-471 / A3(2) / M145) protein is Biotin synthase.